A 608-amino-acid polypeptide reads, in one-letter code: Zinc metalloproteinase-disintegrin-like agkihagin (608 aa).

Positions M1–S20 are cleaved as a signal peptide. Residues I21 to P189 constitute a propeptide that is removed on maturation. Residues K199–P395 enclose the Peptidase M12B domain. Intrachain disulfides connect C310/C390, C350/C374, and C352/C357. H335 provides a ligand contact to Zn(2+). The active site involves E336. H339 and H345 together coordinate Zn(2+). One can recognise a Disintegrin domain in the interval P403–N488. Positions 405, 408, 410, 412, 415, and 418 each coordinate Ca(2+). Disulfide bonds link C406-C435, C417-C430, C419-C425, C429-C452, C443-C449, C448-C474, C461-C481, C468-C499, C492-C504, C511-C561, C526-C570, C539-C549, C556-C596, and C590-C601. The short motif at E467–D469 is the D/ECD-tripeptide element. Ca(2+) is bound by residues D469, M470, D472, D483, and R484. A glycan (N-linked (GlcNAc...) asparagine) is linked at N501.

The protein belongs to the venom metalloproteinase (M12B) family. P-III subfamily. P-IIIc sub-subfamily. Homodimer; disulfide-linked. Zn(2+) serves as cofactor. As to expression, expressed by the venom gland.

The protein resides in the secreted. Inhibited by EDTA and EGTA. Not inhibited by PMSF, antipain, pepstatin, and iodoacetamide. Strongly inhibits the collagen-induced human platelet aggregation. Hydrolyzes the Aalpha-chain of fibrinogen (FGA), without cleavage of Bbeta- and gamma-chains. Induces apoptosis and strongly inhibits proliferation of endothelial cells as well as adhesion of the cells to extracellular matrix proteins. This chain is Zinc metalloproteinase-disintegrin-like agkihagin, found in Deinagkistrodon acutus (Hundred-pace snake).